The following is a 368-amino-acid chain: uncharacterized protein (368 aa).

The span at 156–182 (SNVNAHNNNNNSNNNNNNNNNSNNNNN) shows a compositional bias: low complexity. 3 disordered regions span residues 156–213 (SNVN…SSPY), 228–259 (ASTN…INDL), and 291–319 (STTS…FSTA). Residues 183–194 (LYNQTQFSTRYF) are compositionally biased toward polar residues. Low complexity-rich tracts occupy residues 195–213 (NSNS…SSPY) and 228–240 (ASTN…SNNS). Composition is skewed to polar residues over residues 241–254 (MHTN…TSAD) and 297–311 (IGTN…PSPS).

This is an uncharacterized protein from Saccharomyces cerevisiae (strain ATCC 204508 / S288c) (Baker's yeast).